A 99-amino-acid polypeptide reads, in one-letter code: Aspartyl/glutamyl-tRNA(Asn/Gln) amidotransferase subunit C (99 aa).

It belongs to the GatC family. In terms of assembly, heterotrimer of A, B and C subunits.

It catalyses the reaction L-glutamyl-tRNA(Gln) + L-glutamine + ATP + H2O = L-glutaminyl-tRNA(Gln) + L-glutamate + ADP + phosphate + H(+). The enzyme catalyses L-aspartyl-tRNA(Asn) + L-glutamine + ATP + H2O = L-asparaginyl-tRNA(Asn) + L-glutamate + ADP + phosphate + 2 H(+). Functionally, allows the formation of correctly charged Asn-tRNA(Asn) or Gln-tRNA(Gln) through the transamidation of misacylated Asp-tRNA(Asn) or Glu-tRNA(Gln) in organisms which lack either or both of asparaginyl-tRNA or glutaminyl-tRNA synthetases. The reaction takes place in the presence of glutamine and ATP through an activated phospho-Asp-tRNA(Asn) or phospho-Glu-tRNA(Gln). This is Aspartyl/glutamyl-tRNA(Asn/Gln) amidotransferase subunit C from Cupriavidus metallidurans (strain ATCC 43123 / DSM 2839 / NBRC 102507 / CH34) (Ralstonia metallidurans).